The chain runs to 400 residues: Glycerol-3-phosphate dehydrogenase [NAD(+)] 1 (400 aa).

NAD(+) contacts are provided by residues 50–55 (GSGNWG), F138, K161, and A194. Position 161 (K161) interacts with substrate. K254 serves as the catalytic Proton acceptor. The NAD(+) site is built by R319 and Q348. Position 319-320 (319-320 (RN)) interacts with substrate.

This sequence belongs to the NAD-dependent glycerol-3-phosphate dehydrogenase family.

It catalyses the reaction sn-glycerol 3-phosphate + NAD(+) = dihydroxyacetone phosphate + NADH + H(+). In Candida glabrata (strain ATCC 2001 / BCRC 20586 / JCM 3761 / NBRC 0622 / NRRL Y-65 / CBS 138) (Yeast), this protein is Glycerol-3-phosphate dehydrogenase [NAD(+)] 1 (GPD1).